The primary structure comprises 588 residues: Histone deacetylase 9 (588 aa).

Ser22 carries the phosphoserine modification. The tract at residues 23-27 (PLDLR) is interaction with CTBP1. Positions 110-147 (RQEQEVERHRREQQLPPLRGKDRGRERAVASTEVKQKL) are enriched in basic and acidic residues. Disordered stretches follow at residues 110-170 (RQEQ…HSVG), 183-242 (TSLD…SSPL), and 264-301 (SSVS…PHPE). Residues 136–154 (RAVASTEVKQKLQEFLLSK) are interaction with MEF2. Polar residues-rich tracts occupy residues 154 to 166 (KSAT…NGKN) and 185 to 199 (LDQS…SPSY). The tract at residues 175–343 (LWYTAAHHTS…LPAVPSPLNA (169 aa)) is interaction with MAPK10. The span at 208–219 (DSKDDFPLRKTA) shows a compositional bias: basic and acidic residues. The interaction with ETV6 stretch occupies residues 218-261 (TASEPNLKVRSRLKQKVAERRSSPLLRRKDGNLVTSFKKRVFEV). Position 220 is a phosphoserine (Ser220). Basic and acidic residues predominate over residues 233 to 242 (KVAERRSSPL). Ser240 is subject to Phosphoserine; by DYRK1B. A compositionally biased stretch (low complexity) spans 264 to 284 (SSVSSSSPGSGPSSPNNGPAG). At Ser450 the chain carries Phosphoserine. Positions 493-533 (QLKQPGSHLEEAEEELQGDQSMEDRAASKDNSARSDSSACV) are disordered. The span at 514-525 (MEDRAASKDNSA) shows a compositional bias: basic and acidic residues. At Ser552 the chain carries Phosphoserine.

This sequence belongs to the histone deacetylase family. HD type 2 subfamily. In terms of assembly, homodimer. Interacts with ETV6. Interacts with MEF2, HDAC1, HDAC3, HDAC4, HDAC5, CTBP1 and MAPK10. The phosphorylated form interacts with 14-3-3. Interacts with FOXP3 in the absence of T-cell stimulation. In terms of processing, sumoylated. Post-translationally, phosphorylated on Ser-220 and Ser-450; which promotes 14-3-3-binding, impairs interaction with MEF2, and antagonizes antimyogenic activity. Phosphorylated on Ser-240 by DYRK1B; which impairs nuclear accumulation. Phosphorylated by the PKC kinases PKN1 and PKN2, impairing nuclear import. Expressed at high levels in heart, brain and spleen. Expressed in skeletal muscle.

It localises to the nucleus. It catalyses the reaction N(6)-acetyl-L-lysyl-[histone] + H2O = L-lysyl-[histone] + acetate. Devoided of intrinsic deacetylase activity, promotes the deacetylation of lysine residues on the N-terminal part of the core histones (H2A, H2B, H3 and H4) by recruiting HDAC1 and HDAC3. Histone deacetylation gives a tag for epigenetic repression and plays an important role in transcriptional regulation, cell cycle progression and developmental events. Represses MEF2-dependent transcription, inhibits skeletal myogenesis and may be involved in heart development. Protects neurons from apoptosis, both by inhibiting JUN phosphorylation by MAPK10 and by repressing JUN transcription via HDAC1 recruitment to JUN promoter. The sequence is that of Histone deacetylase 9 (Hdac9) from Mus musculus (Mouse).